Reading from the N-terminus, the 391-residue chain is S-adenosylmethionine synthase (391 aa).

His-14 serves as a coordination point for ATP. Mg(2+) is bound at residue Asp-16. Glu-42 serves as a coordination point for K(+). Positions 55 and 98 each coordinate L-methionine. The flexible loop stretch occupies residues 98–108 (QSADIAMGVDE). ATP is bound by residues 172 to 174 (DGK), 238 to 239 (RF), Asp-247, 253 to 254 (RK), Ala-270, and Lys-274. Asp-247 contacts L-methionine. Lys-278 lines the L-methionine pocket.

Belongs to the AdoMet synthase family. As to quaternary structure, homotetramer; dimer of dimers. It depends on Mg(2+) as a cofactor. The cofactor is K(+).

The protein resides in the cytoplasm. It carries out the reaction L-methionine + ATP + H2O = S-adenosyl-L-methionine + phosphate + diphosphate. Its pathway is amino-acid biosynthesis; S-adenosyl-L-methionine biosynthesis; S-adenosyl-L-methionine from L-methionine: step 1/1. Catalyzes the formation of S-adenosylmethionine (AdoMet) from methionine and ATP. The overall synthetic reaction is composed of two sequential steps, AdoMet formation and the subsequent tripolyphosphate hydrolysis which occurs prior to release of AdoMet from the enzyme. This is S-adenosylmethionine synthase from Clostridium botulinum (strain Alaska E43 / Type E3).